The chain runs to 196 residues: Peptidyl-tRNA hydrolase (196 aa).

Y14 provides a ligand contact to tRNA. H19 serves as the catalytic Proton acceptor. TRNA contacts are provided by Y64, N66, and N112.

Belongs to the PTH family. In terms of assembly, monomer.

It localises to the cytoplasm. The enzyme catalyses an N-acyl-L-alpha-aminoacyl-tRNA + H2O = an N-acyl-L-amino acid + a tRNA + H(+). Functionally, hydrolyzes ribosome-free peptidyl-tRNAs (with 1 or more amino acids incorporated), which drop off the ribosome during protein synthesis, or as a result of ribosome stalling. Catalyzes the release of premature peptidyl moieties from peptidyl-tRNA molecules trapped in stalled 50S ribosomal subunits, and thus maintains levels of free tRNAs and 50S ribosomes. The chain is Peptidyl-tRNA hydrolase from Methylocella silvestris (strain DSM 15510 / CIP 108128 / LMG 27833 / NCIMB 13906 / BL2).